The chain runs to 393 residues: S-adenosylmethionine synthase (393 aa).

An ATP-binding site is contributed by histidine 16. Mg(2+) is bound at residue aspartate 18. A K(+)-binding site is contributed by glutamate 44. Residues glutamate 57 and glutamine 100 each coordinate L-methionine. The interval 100-110 (QSPDIVMGVDG) is flexible loop. ATP is bound by residues 165–167 (DAK), 231–232 (RF), aspartate 240, 246–247 (RK), and lysine 267. L-methionine is bound at residue aspartate 240. Lysine 271 provides a ligand contact to L-methionine.

It belongs to the AdoMet synthase family. Homotetramer; dimer of dimers. Requires Mg(2+) as cofactor. It depends on K(+) as a cofactor.

The protein localises to the cytoplasm. It carries out the reaction L-methionine + ATP + H2O = S-adenosyl-L-methionine + phosphate + diphosphate. It functions in the pathway amino-acid biosynthesis; S-adenosyl-L-methionine biosynthesis; S-adenosyl-L-methionine from L-methionine: step 1/1. In terms of biological role, catalyzes the formation of S-adenosylmethionine (AdoMet) from methionine and ATP. The overall synthetic reaction is composed of two sequential steps, AdoMet formation and the subsequent tripolyphosphate hydrolysis which occurs prior to release of AdoMet from the enzyme. This is S-adenosylmethionine synthase from Coxiella burnetii (strain Dugway 5J108-111).